Reading from the N-terminus, the 122-residue chain is Fluoride-specific ion channel FluC 2 (122 aa).

Helical transmembrane passes span 3-23, 38-58, 62-82, and 93-113; these read ITAISLVLFGSTFGLIFRMFI, TSIVNFIASFFLGILLALNLT, LLLLFYIGFLGCFSTFSSFIY, and FMHLFFHYFEVIIISFICFYL. Na(+)-binding residues include glycine 72 and serine 75.

The protein belongs to the fluoride channel Fluc/FEX (TC 1.A.43) family.

The protein resides in the cell inner membrane. It carries out the reaction fluoride(in) = fluoride(out). With respect to regulation, na(+) is not transported, but it plays an essential structural role and its presence is essential for fluoride channel function. Functionally, fluoride-specific ion channel. Important for reducing fluoride concentration in the cell, thus reducing its toxicity. The polypeptide is Fluoride-specific ion channel FluC 2 (Prochlorococcus marinus (strain MIT 9312)).